Here is a 624-residue protein sequence, read N- to C-terminus: DNA mismatch repair protein MutL (624 aa).

The interval 355–377 (EESAPERKLPEKTPEPSYSPMKL) is disordered. Residues 358 to 368 (APERKLPEKTP) show a composition bias toward basic and acidic residues.

The protein belongs to the DNA mismatch repair MutL/HexB family.

Its function is as follows. This protein is involved in the repair of mismatches in DNA. It is required for dam-dependent methyl-directed DNA mismatch repair. May act as a 'molecular matchmaker', a protein that promotes the formation of a stable complex between two or more DNA-binding proteins in an ATP-dependent manner without itself being part of a final effector complex. In Bacillus velezensis (strain DSM 23117 / BGSC 10A6 / LMG 26770 / FZB42) (Bacillus amyloliquefaciens subsp. plantarum), this protein is DNA mismatch repair protein MutL.